The chain runs to 887 residues: Alanine--tRNA ligase (887 aa).

The span at M425–Q441 shows a compositional bias: basic and acidic residues. A disordered region spans residues M425 to S448. Zn(2+)-binding residues include H569, H573, C672, and H676.

This sequence belongs to the class-II aminoacyl-tRNA synthetase family. Zn(2+) serves as cofactor.

It localises to the cytoplasm. It carries out the reaction tRNA(Ala) + L-alanine + ATP = L-alanyl-tRNA(Ala) + AMP + diphosphate. In terms of biological role, catalyzes the attachment of alanine to tRNA(Ala) in a two-step reaction: alanine is first activated by ATP to form Ala-AMP and then transferred to the acceptor end of tRNA(Ala). Also edits incorrectly charged Ser-tRNA(Ala) and Gly-tRNA(Ala) via its editing domain. The chain is Alanine--tRNA ligase from Chlorobium luteolum (strain DSM 273 / BCRC 81028 / 2530) (Pelodictyon luteolum).